The primary structure comprises 199 residues: Thymidine kinase (199 aa).

ATP is bound by residues 15-22 and 88-91; these read GSMFSGKS and DEVQ. Glu89 acts as the Proton acceptor in catalysis. Residues Cys145, Cys148, Cys183, and His186 each coordinate Zn(2+).

The protein belongs to the thymidine kinase family. As to quaternary structure, homotetramer.

Its subcellular location is the cytoplasm. The enzyme catalyses thymidine + ATP = dTMP + ADP + H(+). The sequence is that of Thymidine kinase from Staphylococcus saprophyticus subsp. saprophyticus (strain ATCC 15305 / DSM 20229 / NCIMB 8711 / NCTC 7292 / S-41).